The sequence spans 160 residues: Fimbrial protein (160 aa).

The propeptide at methionine 1–glycine 7 is leader sequence. Phenylalanine 8 carries the N-methylphenylalanine modification. The helical transmembrane segment at phenylalanine 8–isoleucine 28 threads the bilayer.

The protein belongs to the N-Me-Phe pilin family. The pili are polar flexible filaments of about 5.4 nanometers diameter and 2.5 micrometers average length; they consist of only a single polypeptide chain arranged in a helical configuration of five subunits per turn in the assembled pilus.

Its subcellular location is the fimbrium. It is found in the membrane. The protein is Fimbrial protein (fimA) of Dichelobacter nodosus (Bacteroides nodosus).